Reading from the N-terminus, the 86-residue chain is Large ribosomal subunit protein eL43 (86 aa).

The C4-type zinc finger occupies 38–60 (CPFCGHKGKVYRLSTGVWACKKC).

This sequence belongs to the eukaryotic ribosomal protein eL43 family. Zn(2+) serves as cofactor.

This Desulfurococcus amylolyticus (strain DSM 18924 / JCM 16383 / VKM B-2413 / 1221n) (Desulfurococcus kamchatkensis) protein is Large ribosomal subunit protein eL43.